A 745-amino-acid chain; its full sequence is Double-stranded RNA-specific editase B2 (745 aa).

2 disordered regions span residues 1–35 (MASV…RKDK) and 50–104 (SPGT…PLEE). The span at 20–34 (CKSKRRRRRRSKRKD) shows a compositional bias: basic residues. The segment at 23-35 (KRRRRRRSKRKDK) is R-domain (ssRNA-binding). DRBM domains lie at 125–191 (TPKN…SFVQ) and 283–347 (NPVV…ALFD). In terms of domain architecture, A to I editase spans 414-741 (VLSSGTKCIS…VRKPPEQDQF (328 aa)). Residue H438 participates in Zn(2+) binding. E440 (proton donor) is an active-site residue. 2 residues coordinate Zn(2+): C496 and C561.

In terms of tissue distribution, brain specific.

The protein localises to the nucleus. Its function is as follows. Lacks editing activity. It prevents the binding of other ADAR enzymes to targets in vitro, and decreases the efficiency of these enzymes. Capable of binding to dsRNA but also to ssRNA. This is Double-stranded RNA-specific editase B2 (Adarb2) from Mus musculus (Mouse).